The following is a 208-amino-acid chain: Large ribosomal subunit protein uL3 (208 aa).

A disordered region spans residues 134 to 153 (SKFHREAGSTGQCTSPGRTF).

This sequence belongs to the universal ribosomal protein uL3 family. As to quaternary structure, part of the 50S ribosomal subunit. Forms a cluster with proteins L14 and L19.

Functionally, one of the primary rRNA binding proteins, it binds directly near the 3'-end of the 23S rRNA, where it nucleates assembly of the 50S subunit. The protein is Large ribosomal subunit protein uL3 of Treponema pallidum (strain Nichols).